Consider the following 399-residue polypeptide: Lipase member K (399 aa).

The first 19 residues, 1-19 (MWQLLAAACWMLLLGSMYG), serve as a signal peptide directing secretion. In terms of domain architecture, AB hydrolase-1 spans 78–378 (PAVYLQHGLI…HYNHVDFYLG (301 aa)). The active-site Nucleophile is S172. A disulfide bond links C246 and C255. N-linked (GlcNAc...) asparagine glycans are attached at residues N271 and N327. Residues D343 and H372 each act as charge relay system in the active site.

The protein belongs to the AB hydrolase superfamily. Lipase family. In terms of tissue distribution, exclusively expressed in the epidermis within the granular keratinocytes.

The protein resides in the secreted. Plays a highly specific role in the last step of keratinocyte differentiation. May have an essential function in lipid metabolism of the most differentiated epidermal layers. This Homo sapiens (Human) protein is Lipase member K (LIPK).